Here is a 200-residue protein sequence, read N- to C-terminus: Dephospho-CoA kinase (200 aa).

The DPCK domain occupies Arg3–Lys200. Gly11–Thr16 contributes to the ATP binding site.

This sequence belongs to the CoaE family.

Its subcellular location is the cytoplasm. The catalysed reaction is 3'-dephospho-CoA + ATP = ADP + CoA + H(+). It participates in cofactor biosynthesis; coenzyme A biosynthesis; CoA from (R)-pantothenate: step 5/5. In terms of biological role, catalyzes the phosphorylation of the 3'-hydroxyl group of dephosphocoenzyme A to form coenzyme A. The chain is Dephospho-CoA kinase from Corynebacterium efficiens (strain DSM 44549 / YS-314 / AJ 12310 / JCM 11189 / NBRC 100395).